A 150-amino-acid chain; its full sequence is Phosphopantetheine adenylyltransferase (150 aa).

Residue serine 10 coordinates substrate. ATP-binding positions include 10 to 11 (SF) and histidine 18. Residues lysine 42, threonine 74, and arginine 88 each contribute to the substrate site. Residues 89–91 (GLR), glutamate 99, and 124–130 (LAYISSS) contribute to the ATP site.

Belongs to the bacterial CoaD family. Homohexamer. Mg(2+) is required as a cofactor.

It localises to the cytoplasm. It carries out the reaction (R)-4'-phosphopantetheine + ATP + H(+) = 3'-dephospho-CoA + diphosphate. The protein operates within cofactor biosynthesis; coenzyme A biosynthesis; CoA from (R)-pantothenate: step 4/5. Reversibly transfers an adenylyl group from ATP to 4'-phosphopantetheine, yielding dephospho-CoA (dPCoA) and pyrophosphate. The chain is Phosphopantetheine adenylyltransferase from Cytophaga hutchinsonii (strain ATCC 33406 / DSM 1761 / CIP 103989 / NBRC 15051 / NCIMB 9469 / D465).